Consider the following 420-residue polypeptide: Gamma-glutamyl phosphate reductase (420 aa).

This sequence belongs to the gamma-glutamyl phosphate reductase family.

It localises to the cytoplasm. It catalyses the reaction L-glutamate 5-semialdehyde + phosphate + NADP(+) = L-glutamyl 5-phosphate + NADPH + H(+). Its pathway is amino-acid biosynthesis; L-proline biosynthesis; L-glutamate 5-semialdehyde from L-glutamate: step 2/2. Catalyzes the NADPH-dependent reduction of L-glutamate 5-phosphate into L-glutamate 5-semialdehyde and phosphate. The product spontaneously undergoes cyclization to form 1-pyrroline-5-carboxylate. The protein is Gamma-glutamyl phosphate reductase of Streptococcus pneumoniae (strain 70585).